Consider the following 424-residue polypeptide: Serine--tRNA ligase (424 aa).

Basic and acidic residues predominate over residues 1 to 15 (MIDPKLLRTDPDAVR). The tract at residues 1-27 (MIDPKLLRTDPDAVRRSQAARGEDSSV) is disordered. 230–232 (TSE) contributes to the L-serine binding site. Residues 261–263 (RRE) and Val-277 each bind ATP. Position 284 (Glu-284) interacts with L-serine. 348–351 (EITS) serves as a coordination point for ATP. Thr-382 lines the L-serine pocket.

The protein belongs to the class-II aminoacyl-tRNA synthetase family. Type-1 seryl-tRNA synthetase subfamily. As to quaternary structure, homodimer. The tRNA molecule binds across the dimer.

The protein resides in the cytoplasm. The enzyme catalyses tRNA(Ser) + L-serine + ATP = L-seryl-tRNA(Ser) + AMP + diphosphate + H(+). It catalyses the reaction tRNA(Sec) + L-serine + ATP = L-seryl-tRNA(Sec) + AMP + diphosphate + H(+). It functions in the pathway aminoacyl-tRNA biosynthesis; selenocysteinyl-tRNA(Sec) biosynthesis; L-seryl-tRNA(Sec) from L-serine and tRNA(Sec): step 1/1. Catalyzes the attachment of serine to tRNA(Ser). Is also able to aminoacylate tRNA(Sec) with serine, to form the misacylated tRNA L-seryl-tRNA(Sec), which will be further converted into selenocysteinyl-tRNA(Sec). This is Serine--tRNA ligase from Cutibacterium acnes (strain DSM 16379 / KPA171202) (Propionibacterium acnes).